A 394-amino-acid chain; its full sequence is Exodeoxyribonuclease 7 large subunit (394 aa).

It belongs to the XseA family. As to quaternary structure, heterooligomer composed of large and small subunits.

It is found in the cytoplasm. The catalysed reaction is Exonucleolytic cleavage in either 5'- to 3'- or 3'- to 5'-direction to yield nucleoside 5'-phosphates.. Its function is as follows. Bidirectionally degrades single-stranded DNA into large acid-insoluble oligonucleotides, which are then degraded further into small acid-soluble oligonucleotides. The polypeptide is Exodeoxyribonuclease 7 large subunit (Thermotoga sp. (strain RQ2)).